The sequence spans 332 residues: Ketol-acid reductoisomerase (NADP(+)) (332 aa).

One can recognise a KARI N-terminal Rossmann domain in the interval 5 to 185; that stretch reads VKVYYDDEVS…GCTRAGVIET (181 aa). NADP(+) is bound by residues 28–31, arginine 51, serine 56, and 86–89; these read YGNQ and DLVQ. The active site involves histidine 111. Glycine 137 is an NADP(+) binding site. The KARI C-terminal knotted domain occupies 186–331; sequence TFKDETESDL…RFIRKMSGLE (146 aa). 4 residues coordinate Mg(2+): aspartate 194, glutamate 198, glutamate 230, and glutamate 234. Position 255 (serine 255) interacts with substrate.

Belongs to the ketol-acid reductoisomerase family. Mg(2+) serves as cofactor.

The catalysed reaction is (2R)-2,3-dihydroxy-3-methylbutanoate + NADP(+) = (2S)-2-acetolactate + NADPH + H(+). The enzyme catalyses (2R,3R)-2,3-dihydroxy-3-methylpentanoate + NADP(+) = (S)-2-ethyl-2-hydroxy-3-oxobutanoate + NADPH + H(+). It functions in the pathway amino-acid biosynthesis; L-isoleucine biosynthesis; L-isoleucine from 2-oxobutanoate: step 2/4. Its pathway is amino-acid biosynthesis; L-valine biosynthesis; L-valine from pyruvate: step 2/4. In terms of biological role, involved in the biosynthesis of branched-chain amino acids (BCAA). Catalyzes an alkyl-migration followed by a ketol-acid reduction of (S)-2-acetolactate (S2AL) to yield (R)-2,3-dihydroxy-isovalerate. In the isomerase reaction, S2AL is rearranged via a Mg-dependent methyl migration to produce 3-hydroxy-3-methyl-2-ketobutyrate (HMKB). In the reductase reaction, this 2-ketoacid undergoes a metal-dependent reduction by NADPH to yield (R)-2,3-dihydroxy-isovalerate. This Pyrococcus abyssi (strain GE5 / Orsay) protein is Ketol-acid reductoisomerase (NADP(+)).